The primary structure comprises 158 residues: Cyclic pyranopterin monophosphate synthase (158 aa).

Residues 76–78 (LCH) and 114–115 (ME) each bind substrate. Asp129 is an active-site residue.

This sequence belongs to the MoaC family. In terms of assembly, homohexamer; trimer of dimers.

It carries out the reaction (8S)-3',8-cyclo-7,8-dihydroguanosine 5'-triphosphate = cyclic pyranopterin phosphate + diphosphate. It functions in the pathway cofactor biosynthesis; molybdopterin biosynthesis. Functionally, catalyzes the conversion of (8S)-3',8-cyclo-7,8-dihydroguanosine 5'-triphosphate to cyclic pyranopterin monophosphate (cPMP). The protein is Cyclic pyranopterin monophosphate synthase of Shewanella piezotolerans (strain WP3 / JCM 13877).